We begin with the raw amino-acid sequence, 180 residues long: O-acetyl-ADP-ribose deacetylase (180 aa).

The 175-residue stretch at 1 to 175 folds into the Macro domain; it reads MKPQIDVIHG…LYQRLLTQRG (175 aa). Substrate-binding positions include 11–12, Asn25, 33–35, and 122–126; these read DI, GVD, and STGVY. The active-site Proton acceptor is Asp35.

It belongs to the MacroD-type family. YmdB subfamily. Homodimer. Interacts with RNase III.

The enzyme catalyses 3''-O-acetyl-ADP-D-ribose + H2O = ADP-D-ribose + acetate + H(+). It catalyses the reaction 2''-O-acetyl-ADP-D-ribose + H2O = ADP-D-ribose + acetate + H(+). Deacetylates O-acetyl-ADP ribose to yield ADP-ribose and free acetate. Down-regulates ribonuclease 3 (RNase III) activity. Acts by interacting directly with the region of the ribonuclease that is required for dimerization/activation. The sequence is that of O-acetyl-ADP-ribose deacetylase from Enterobacter cloacae subsp. cloacae (strain ATCC 13047 / DSM 30054 / NBRC 13535 / NCTC 10005 / WDCM 00083 / NCDC 279-56).